The chain runs to 149 residues: D-aminoacyl-tRNA deacylase (149 aa).

A Gly-cisPro motif, important for rejection of L-amino acids motif is present at residues 137–138 (GP).

The protein belongs to the DTD family. In terms of assembly, homodimer.

The protein localises to the cytoplasm. The catalysed reaction is glycyl-tRNA(Ala) + H2O = tRNA(Ala) + glycine + H(+). It catalyses the reaction a D-aminoacyl-tRNA + H2O = a tRNA + a D-alpha-amino acid + H(+). Functionally, an aminoacyl-tRNA editing enzyme that deacylates mischarged D-aminoacyl-tRNAs. Also deacylates mischarged glycyl-tRNA(Ala), protecting cells against glycine mischarging by AlaRS. Acts via tRNA-based rather than protein-based catalysis; rejects L-amino acids rather than detecting D-amino acids in the active site. By recycling D-aminoacyl-tRNA to D-amino acids and free tRNA molecules, this enzyme counteracts the toxicity associated with the formation of D-aminoacyl-tRNA entities in vivo and helps enforce protein L-homochirality. The chain is D-aminoacyl-tRNA deacylase from Herminiimonas arsenicoxydans.